A 1002-amino-acid chain; its full sequence is SIT4-associating protein SAP155 (1002 aa).

5 disordered regions span residues 51-131 (GTSD…APMM), 214-273 (QQQL…ANED), 609-645 (EQLK…ESDY), 868-901 (DNTT…GGGQ), and 940-1002 (NTEN…YDHE). Phosphoserine is present on serine 58. Positions 62–97 (EYSHGDEVKTARGDQKSRFEKDDQQERYEKEEEERS) are enriched in basic and acidic residues. Positions 98 to 114 (MNSSESSTTSFSSGSTS) are enriched in low complexity. Residues 220 to 241 (SSQEDVYVESDTEQEEEKEDDN) are compositionally biased toward acidic residues. The residue at position 255 (serine 255) is a Phosphoserine. Residues 262 to 273 (NNNDDDDDANED) are compositionally biased toward acidic residues. Positions 609 to 626 (EQLKTKHSPTRDTDHDLK) are enriched in basic and acidic residues. Threonine 613 and threonine 618 each carry phosphothreonine. Acidic residues predominate over residues 635 to 645 (DNNDNDDESDY). Positions 868–885 (DNTTVLTPNGDASNNNEI) are enriched in polar residues. Over residues 956 to 976 (SNSNINNTNHNSNNSNNNDNN) the composition is skewed to low complexity. Acidic residues predominate over residues 991-1002 (EDADNDNDYDHE).

Belongs to the SAPS family. In terms of assembly, associates with the SIT4 protein phosphatase catalytic subunit in a cell-cycle-dependent manner. Hyperphosphorylated in the absence of SIT4.

Its subcellular location is the cytoplasm. In terms of biological role, positive regulator of protein phosphatase SIT4. Involved in directing expression of TOR-repressed genes and in dephosphorylation of NPR1 in response to nutrient starvation. Negatively modulates K(+) efflux of the cell by the Na(+)-K(+)/H(+) antiporter NHA1. The chain is SIT4-associating protein SAP155 (SAP155) from Saccharomyces cerevisiae (strain ATCC 204508 / S288c) (Baker's yeast).